A 430-amino-acid polypeptide reads, in one-letter code: Serine--tRNA ligase (430 aa).

Positions 47 to 66 (AQAEQNKASKEAGAAKGRGD) are disordered. 231 to 233 (TSE) is a binding site for L-serine. An ATP-binding site is contributed by 262–264 (RSE). L-serine is bound at residue Glu285. 349-352 (EISS) is an ATP binding site. Ser385 serves as a coordination point for L-serine.

Belongs to the class-II aminoacyl-tRNA synthetase family. Type-1 seryl-tRNA synthetase subfamily. Homodimer. The tRNA molecule binds across the dimer.

It is found in the cytoplasm. The enzyme catalyses tRNA(Ser) + L-serine + ATP = L-seryl-tRNA(Ser) + AMP + diphosphate + H(+). The catalysed reaction is tRNA(Sec) + L-serine + ATP = L-seryl-tRNA(Sec) + AMP + diphosphate + H(+). The protein operates within aminoacyl-tRNA biosynthesis; selenocysteinyl-tRNA(Sec) biosynthesis; L-seryl-tRNA(Sec) from L-serine and tRNA(Sec): step 1/1. Functionally, catalyzes the attachment of serine to tRNA(Ser). Is also able to aminoacylate tRNA(Sec) with serine, to form the misacylated tRNA L-seryl-tRNA(Sec), which will be further converted into selenocysteinyl-tRNA(Sec). This Paracoccus denitrificans (strain Pd 1222) protein is Serine--tRNA ligase.